Reading from the N-terminus, the 519-residue chain is Nitrogen fixation regulatory protein (519 aa).

A PAS 1 domain is found at 23–93 (LPEIFRQTVE…QALWGRLAQK (71 aa)). The 55-residue stretch at 94–148 (KPWSGVLVNRRKDKTLYLAELTVAPVLNEAGETIYYLGMHRDTSELHELEQRVNN) folds into the PAC domain. The 67-residue stretch at 151-217 (LMIEAVVNAA…FETLENQGSA (67 aa)) folds into the PAS 2 domain. The region spanning 302–517 (AAIHRLQGPV…RIVVELPFSA (216 aa)) is the Histidine kinase domain. At His-305 the chain carries Phosphohistidine; by autocatalysis.

It depends on FAD as a cofactor.

It carries out the reaction ATP + protein L-histidine = ADP + protein N-phospho-L-histidine.. In terms of biological role, required for the inhibition of NifA activity in response to oxygen and low level of fixed nitrogen. The polypeptide is Nitrogen fixation regulatory protein (nifL) (Azotobacter vinelandii).